A 317-amino-acid polypeptide reads, in one-letter code: Glutamyl-tRNA reductase-binding protein, chloroplastic (317 aa).

The transit peptide at 1–42 (MQLQTQSFALNLLPSPNFAKPIERREFISLKRDPSRPISLRC) directs the protein to the chloroplast.

Interacts with HEMA1 and forms a heterotetramer of two GLUTRBP and two HEMA1 subunits.

The protein localises to the plastid. It is found in the chloroplast stroma. Functionally, involved in the regulation of glutamyl-tRNA reductase (GluTR) which is important for the synthesis and distribution of 5-aminolevulinate, a precursor in heme and chlorophyll biosynthesis. Stimulates GluTR activity and regulates glutamate-1-semialdehyde release. May play a role in heme metabolism. Necessary for efficient photosynthetic electron transport in chloroplasts. The sequence is that of Glutamyl-tRNA reductase-binding protein, chloroplastic from Arabidopsis thaliana (Mouse-ear cress).